The chain runs to 309 residues: Ribosomal RNA small subunit methyltransferase H (309 aa).

S-adenosyl-L-methionine contacts are provided by residues 36–38 (AGH), Asp-55, Phe-81, Asp-102, and Gln-109.

Belongs to the methyltransferase superfamily. RsmH family.

The protein resides in the cytoplasm. The catalysed reaction is cytidine(1402) in 16S rRNA + S-adenosyl-L-methionine = N(4)-methylcytidine(1402) in 16S rRNA + S-adenosyl-L-homocysteine + H(+). Functionally, specifically methylates the N4 position of cytidine in position 1402 (C1402) of 16S rRNA. In Mycoplasma genitalium (strain ATCC 33530 / DSM 19775 / NCTC 10195 / G37) (Mycoplasmoides genitalium), this protein is Ribosomal RNA small subunit methyltransferase H.